Consider the following 54-residue polypeptide: Large ribosomal subunit protein bL33 (54 aa).

The protein belongs to the bacterial ribosomal protein bL33 family.

The polypeptide is Large ribosomal subunit protein bL33 (Thermus thermophilus (strain ATCC BAA-163 / DSM 7039 / HB27)).